Reading from the N-terminus, the 525-residue chain is 2,3-bisphosphoglycerate-independent phosphoglycerate mutase 2 (525 aa).

D14 and S64 together coordinate Mn(2+). The Phosphoserine intermediate role is filled by S64. Residues H125, 155-156 (RD), R187, R193, 274-277 (RADR), and K347 each bind substrate. Positions 414, 418, 455, 456, and 474 each coordinate Mn(2+).

This sequence belongs to the BPG-independent phosphoglycerate mutase family. The cofactor is Mn(2+).

The catalysed reaction is (2R)-2-phosphoglycerate = (2R)-3-phosphoglycerate. It functions in the pathway carbohydrate degradation; glycolysis; pyruvate from D-glyceraldehyde 3-phosphate: step 3/5. Catalyzes the interconversion of 2-phosphoglycerate and 3-phosphoglycerate. This is 2,3-bisphosphoglycerate-independent phosphoglycerate mutase 2 from Methanosarcina barkeri (strain Fusaro / DSM 804).